We begin with the raw amino-acid sequence, 478 residues long: Aspartate ammonia-lyase (478 aa).

The L-aspartate site is built by Thr109, Ser148, Thr149, Asn150, and Thr195. An SS loop region spans residues 326–335 (GSSIMPGKVN). Ser327 (proton acceptor) is an active-site residue. Positions 328 and 333 each coordinate L-aspartate.

It belongs to the class-II fumarase/aspartase family. Aspartase subfamily. In terms of assembly, homotetramer.

The catalysed reaction is L-aspartate = fumarate + NH4(+). In terms of biological role, catalyzes the reversible conversion of L-aspartate to fumarate and ammonia. The polypeptide is Aspartate ammonia-lyase (Pseudomonas fluorescens).